The following is a 261-amino-acid chain: Triosephosphate isomerase (261 aa).

10–12 serves as a coordination point for substrate; sequence NWK. Catalysis depends on His100, which acts as the Electrophile. Glu172 (proton acceptor) is an active-site residue. Substrate-binding positions include Gly178, Ser218, and 239 to 240; that span reads GG.

The protein belongs to the triosephosphate isomerase family. As to quaternary structure, homodimer.

Its subcellular location is the cytoplasm. It catalyses the reaction D-glyceraldehyde 3-phosphate = dihydroxyacetone phosphate. It participates in carbohydrate biosynthesis; gluconeogenesis. The protein operates within carbohydrate degradation; glycolysis; D-glyceraldehyde 3-phosphate from glycerone phosphate: step 1/1. Its function is as follows. Involved in the gluconeogenesis. Catalyzes stereospecifically the conversion of dihydroxyacetone phosphate (DHAP) to D-glyceraldehyde-3-phosphate (G3P). The chain is Triosephosphate isomerase from Rhodococcus jostii (strain RHA1).